The primary structure comprises 285 residues: Nucleotide-binding protein PSPTO_4456 (285 aa).

8–15 serves as a coordination point for ATP; sequence GRSGSGKS. 60 to 63 is a binding site for GTP; sequence DARN.

It belongs to the RapZ-like family.

In terms of biological role, displays ATPase and GTPase activities. The protein is Nucleotide-binding protein PSPTO_4456 of Pseudomonas syringae pv. tomato (strain ATCC BAA-871 / DC3000).